A 364-amino-acid chain; its full sequence is Long-wave-sensitive opsin 1 (364 aa).

A disordered region spans residues 1–23 (MAQQWSLQRLAGRHPQDSYEDST). The Extracellular segment spans residues 1–52 (MAQQWSLQRLAGRHPQDSYEDSTQSSIFTYTNSNSTRGPFEGPNYHIAPRWV). An O-linked (GlcNAc) serine glycan is attached at Ser22. Asn34 is a glycosylation site (N-linked (GlcNAc...) asparagine). The chain crosses the membrane as a helical span at residues 53–77 (YHLTSVWMIFVVTASVFTNGLVLAA). Residues 78-89 (TMKFKKLRHPLN) lie on the Cytoplasmic side of the membrane. Residues 90 to 115 (WILVNLAVADLAETVIASTISIVNQV) traverse the membrane as a helical segment. The Extracellular segment spans residues 116 to 129 (SGYFVLGHPMCVLE). A disulfide bond links Cys126 and Cys203. Residues 130-149 (GYTVSLCGITGLWSLAIISW) traverse the membrane as a helical segment. The Cytoplasmic portion of the chain corresponds to 150–168 (ERWMVVCKPFGNVRFDAKL). Residues 169–192 (AIVGIAFSWIWAAVWTAPPIFGWS) traverse the membrane as a helical segment. The Extracellular segment spans residues 193–218 (RYWPHGLKTSCGPDVFSGSSYPGVQS). Residues 219–246 (YMIVLMVTCCIIPLAIIMLCYLQVWLAI) traverse the membrane as a helical segment. Residues 247-268 (RAVAKQQKESESTQKAEKEVTR) lie on the Cytoplasmic side of the membrane. A helical membrane pass occupies residues 269 to 292 (MVVVMIFAYCVCWGPYTFFACFAA). Over 293–300 (ANPGYAFH) the chain is Extracellular. A helical membrane pass occupies residues 301–325 (PLMAALPAYFAKSATIYNPVIYVFM). At Lys312 the chain carries N6-(retinylidene)lysine. The Cytoplasmic segment spans residues 326 to 364 (NRQFRNCILQLFGKKVDDGSELSSASKTEVSSVSSVSPA).

The protein belongs to the G-protein coupled receptor 1 family. Opsin subfamily. In terms of processing, phosphorylated on some or all of the serine and threonine residues present in the C-terminal region. The three color pigments are found in the cone photoreceptor cells.

The protein resides in the membrane. Functionally, visual pigments are the light-absorbing molecules that mediate vision. They consist of an apoprotein, opsin, covalently linked to cis-retinal. The polypeptide is Long-wave-sensitive opsin 1 (OPN1LW) (Homo sapiens (Human)).